Consider the following 379-residue polypeptide: MPLINLPAFAGDLLADFERLKTLRVDTPVIQPAEPFLDMAGEDLRRRIFMTQSETGDSLCLRPEFTIPVCLRHIETATGTPQRYAYLGEVFRQRREGSSEFYQAGIEDLGDTDTAGADARAIGDAMRVLSNRLANRRLKVTLGDQSVFEAVIAACGLPGGWQKRLIHAFGDPKQLQKLLGELADPKSPGVFGHEVERLAILGILDDEERLVAHLAETMEATGYSTNASRSPRDIARRLKEKMELATTRLDRAALAVMREFLAFDLPLSEAPAALHAFAKKSRLKIDDALSLFDARVAAIAKVGAESDLIRYRAAFGRPLDYYTGLVFEIEAEGAPAVLAGGGRFDRLLTLLGAREHIPAVGFSLWLDRIERAIAAAGGA.

The protein belongs to the class-II aminoacyl-tRNA synthetase family. HisZ subfamily. In terms of assembly, heteromultimer composed of HisG and HisZ subunits.

Its subcellular location is the cytoplasm. The protein operates within amino-acid biosynthesis; L-histidine biosynthesis; L-histidine from 5-phospho-alpha-D-ribose 1-diphosphate: step 1/9. Functionally, required for the first step of histidine biosynthesis. May allow the feedback regulation of ATP phosphoribosyltransferase activity by histidine. The protein is ATP phosphoribosyltransferase regulatory subunit of Sinorhizobium fredii (strain NBRC 101917 / NGR234).